The primary structure comprises 1358 residues: DNA-directed RNA polymerase subunit beta (1358 aa).

This sequence belongs to the RNA polymerase beta chain family. As to quaternary structure, the RNAP catalytic core consists of 2 alpha, 1 beta, 1 beta' and 1 omega subunit. When a sigma factor is associated with the core the holoenzyme is formed, which can initiate transcription.

The enzyme catalyses RNA(n) + a ribonucleoside 5'-triphosphate = RNA(n+1) + diphosphate. DNA-dependent RNA polymerase catalyzes the transcription of DNA into RNA using the four ribonucleoside triphosphates as substrates. The sequence is that of DNA-directed RNA polymerase subunit beta from Francisella tularensis subsp. holarctica (strain LVS).